The chain runs to 227 residues: uncharacterized protein (227 aa).

Positions 3 to 119 constitute an RCK N-terminal domain; the sequence is RADFCIIGLG…STMGIREALI (117 aa). Positions 134-221 constitute an RCK C-terminal domain; the sequence is HGLENEIINL…LNKYLNYINP (88 aa).

This is an uncharacterized protein from Mycoplasma genitalium (strain ATCC 33530 / DSM 19775 / NCTC 10195 / G37) (Mycoplasmoides genitalium).